The primary structure comprises 160 residues: 3-hydroxyacyl-[acyl-carrier-protein] dehydratase FabZ (160 aa).

Histidine 63 is an active-site residue.

Belongs to the thioester dehydratase family. FabZ subfamily.

The protein resides in the cytoplasm. It carries out the reaction a (3R)-hydroxyacyl-[ACP] = a (2E)-enoyl-[ACP] + H2O. In terms of biological role, involved in unsaturated fatty acids biosynthesis. Catalyzes the dehydration of short chain beta-hydroxyacyl-ACPs and long chain saturated and unsaturated beta-hydroxyacyl-ACPs. The protein is 3-hydroxyacyl-[acyl-carrier-protein] dehydratase FabZ of Xylella fastidiosa (strain M12).